Consider the following 439-residue polypeptide: Apolipoprotein N-acyltransferase (439 aa).

Helical transmembrane passes span 13 to 33, 47 to 67, 75 to 95, 97 to 117, 149 to 169, and 175 to 195; these read LLAG…FLVF, LFSF…IPLI, FIAY…QFGL, YLLW…YTLV, NAGT…FPLF, and IFSL…ETSY. In terms of domain architecture, CN hydrolase spans 207–439; it reads IQPFVPQDVK…GSRGILLFSF (233 aa). The active-site Proton acceptor is E248. Residue K305 is part of the active site. The Nucleophile role is filled by C355.

The protein belongs to the CN hydrolase family. Apolipoprotein N-acyltransferase subfamily.

It is found in the cell inner membrane. The enzyme catalyses N-terminal S-1,2-diacyl-sn-glyceryl-L-cysteinyl-[lipoprotein] + a glycerophospholipid = N-acyl-S-1,2-diacyl-sn-glyceryl-L-cysteinyl-[lipoprotein] + a 2-acyl-sn-glycero-3-phospholipid + H(+). It functions in the pathway protein modification; lipoprotein biosynthesis (N-acyl transfer). Catalyzes the phospholipid dependent N-acylation of the N-terminal cysteine of apolipoprotein, the last step in lipoprotein maturation. In Aquifex aeolicus (strain VF5), this protein is Apolipoprotein N-acyltransferase.